The chain runs to 57 residues: Somatostatin-2 (57 aa).

Residues 1-26 are disordered; sequence GRSHMVLNSALEGARGGPGGEEIPER.

The protein belongs to the somatostatin family.

It localises to the secreted. Functionally, somatostatin inhibits the release of somatotropin. In Piaractus mesopotamicus (Small-scaled pacu), this protein is Somatostatin-2 (sst2).